Here is a 274-residue protein sequence, read N- to C-terminus: MGFDDTCNTGLVLGLGPSPIPNNYNSTIRQSSVYKLEPSLTLCLSGDPSVTVVTGADQLCRQTSSHSGVSSFSSGRVVKRERDGGEESPEEEEMTERVISDYHEDEEGISARKKLRLTKQQSALLEESFKDHSTLNPKQKQVLARQLNLRPRQVEVWFQNRRARTKLKQTEVDCEFLKKCCETLADENIRLQKEIQELKTLKLTQPFYMHMPASTLTKCPSCERIGGGGGGNGGGGGGSGATAVIVDGSTAKGAFSISSKPHFFNPFTNPSAAC.

Positions 64-74 (SSHSGVSSFSS) are enriched in low complexity. The tract at residues 64–96 (SSHSGVSSFSSGRVVKRERDGGEESPEEEEMTE) is disordered. A DNA-binding region (homeobox) is located at residues 110–169 (SARKKLRLTKQQSALLEESFKDHSTLNPKQKQVLARQLNLRPRQVEVWFQNRRARTKLKQ). Positions 177–198 (LKKCCETLADENIRLQKEIQEL) are leucine-zipper.

The protein belongs to the HD-ZIP homeobox family. Class II subfamily.

It localises to the nucleus. Probable transcription factor. The sequence is that of Homeobox-leucine zipper protein HAT9 (HAT9) from Arabidopsis thaliana (Mouse-ear cress).